A 538-amino-acid chain; its full sequence is C-22 sterol desaturase ERG5 (538 aa).

A helical transmembrane segment spans residues 46–66 (LKIFATLICILLVWDQVAYQI). Glycyl lysine isopeptide (Lys-Gly) (interchain with G-Cter in ubiquitin) cross-links involve residues Lys-164 and Lys-198. Cys-476 serves as a coordination point for heme.

This sequence belongs to the cytochrome P450 family. In terms of assembly, interacts with ERG28. Requires heme as cofactor.

The protein resides in the endoplasmic reticulum membrane. It carries out the reaction 5-dehydroepisterol + NADPH + O2 + H(+) = ergosta-5,7,22,24(28)-tetraen-3beta-ol + NADP(+) + 2 H2O. It participates in steroid metabolism; ergosterol biosynthesis; ergosterol from zymosterol: step 4/5. C-22 sterol desaturase; part of the third module of ergosterol biosynthesis pathway that includes the late steps of the pathway. ERG5 converts 5-dehydroepisterol into ergosta-5,7,22,24(28)-tetraen-3beta-ol by forming the C-22(23) double bond in the sterol side chain. The third module or late pathway involves the ergosterol synthesis itself through consecutive reactions that mainly occur in the endoplasmic reticulum (ER) membrane. Firstly, the squalene synthase ERG9 catalyzes the condensation of 2 farnesyl pyrophosphate moieties to form squalene, which is the precursor of all steroids. Squalene synthase is crucial for balancing the incorporation of farnesyl diphosphate (FPP) into sterol and nonsterol isoprene synthesis. Secondly, the squalene epoxidase ERG1 catalyzes the stereospecific oxidation of squalene to (S)-2,3-epoxysqualene, which is considered to be a rate-limiting enzyme in steroid biosynthesis. Then, the lanosterol synthase ERG7 catalyzes the cyclization of (S)-2,3 oxidosqualene to lanosterol, a reaction that forms the sterol core. In the next steps, lanosterol is transformed to zymosterol through a complex process involving various demethylation, reduction and desaturation reactions. The lanosterol 14-alpha-demethylase ERG11 (also known as CYP51) catalyzes C14-demethylation of lanosterol to produce 4,4'-dimethyl cholesta-8,14,24-triene-3-beta-ol, which is critical for ergosterol biosynthesis. The C-14 reductase ERG24 reduces the C14=C15 double bond of 4,4-dimethyl-cholesta-8,14,24-trienol to produce 4,4-dimethyl-cholesta-8,24-dienol. 4,4-dimethyl-cholesta-8,24-dienol is substrate of the C-4 demethylation complex ERG25-ERG26-ERG27 in which ERG25 catalyzes the three-step monooxygenation required for the demethylation of 4,4-dimethyl and 4alpha-methylsterols, ERG26 catalyzes the oxidative decarboxylation that results in a reduction of the 3-beta-hydroxy group at the C-3 carbon to an oxo group, and ERG27 is responsible for the reduction of the keto group on the C-3. ERG28 has a role as a scaffold to help anchor ERG25, ERG26 and ERG27 to the endoplasmic reticulum and ERG29 regulates the activity of the iron-containing C4-methylsterol oxidase ERG25. Then, the sterol 24-C-methyltransferase ERG6 catalyzes the methyl transfer from S-adenosyl-methionine to the C-24 of zymosterol to form fecosterol. The C-8 sterol isomerase ERG2 catalyzes the reaction which results in unsaturation at C-7 in the B ring of sterols and thus converts fecosterol to episterol. The sterol-C5-desaturase ERG3 then catalyzes the introduction of a C-5 double bond in the B ring to produce 5-dehydroepisterol. The C-22 sterol desaturase ERG5 further converts 5-dehydroepisterol into ergosta-5,7,22,24(28)-tetraen-3beta-ol by forming the C-22(23) double bond in the sterol side chain. Finally, ergosta-5,7,22,24(28)-tetraen-3beta-ol is substrate of the C-24(28) sterol reductase ERG4 to produce ergosterol. This is C-22 sterol desaturase ERG5 from Saccharomyces cerevisiae (strain ATCC 204508 / S288c) (Baker's yeast).